We begin with the raw amino-acid sequence, 301 residues long: Phosphatidylserine decarboxylase proenzyme (301 aa).

Residues Asp117, His173, and Ser260 each act as charge relay system; for autoendoproteolytic cleavage activity in the active site. Ser260 serves as the catalytic Schiff-base intermediate with substrate; via pyruvic acid; for decarboxylase activity. At Ser260 the chain carries Pyruvic acid (Ser); by autocatalysis.

It belongs to the phosphatidylserine decarboxylase family. PSD-B subfamily. Prokaryotic type II sub-subfamily. As to quaternary structure, heterodimer of a large membrane-associated beta subunit and a small pyruvoyl-containing alpha subunit. The cofactor is pyruvate. Post-translationally, is synthesized initially as an inactive proenzyme. Formation of the active enzyme involves a self-maturation process in which the active site pyruvoyl group is generated from an internal serine residue via an autocatalytic post-translational modification. Two non-identical subunits are generated from the proenzyme in this reaction, and the pyruvate is formed at the N-terminus of the alpha chain, which is derived from the carboxyl end of the proenzyme. The autoendoproteolytic cleavage occurs by a canonical serine protease mechanism, in which the side chain hydroxyl group of the serine supplies its oxygen atom to form the C-terminus of the beta chain, while the remainder of the serine residue undergoes an oxidative deamination to produce ammonia and the pyruvoyl prosthetic group on the alpha chain. During this reaction, the Ser that is part of the protease active site of the proenzyme becomes the pyruvoyl prosthetic group, which constitutes an essential element of the active site of the mature decarboxylase.

The protein resides in the cell membrane. It carries out the reaction a 1,2-diacyl-sn-glycero-3-phospho-L-serine + H(+) = a 1,2-diacyl-sn-glycero-3-phosphoethanolamine + CO2. It functions in the pathway phospholipid metabolism; phosphatidylethanolamine biosynthesis; phosphatidylethanolamine from CDP-diacylglycerol: step 2/2. Catalyzes the formation of phosphatidylethanolamine (PtdEtn) from phosphatidylserine (PtdSer). This chain is Phosphatidylserine decarboxylase proenzyme, found in Chlamydia trachomatis serovar L2 (strain ATCC VR-902B / DSM 19102 / 434/Bu).